The chain runs to 142 residues: Hemoglobin subunit zeta (142 aa).

Ser-2 is subject to N-acetylserine. Residues 2-142 (SLMKNERAII…LSSILTEKYR (141 aa)) form the Globin domain. Thr-29 carries the post-translational modification Phosphothreonine. Ser-53 is modified (phosphoserine). Residue His-59 participates in heme b binding. Phosphoserine is present on Ser-73. His-88 serves as a coordination point for heme b.

Belongs to the globin family. Heterotetramer of two zeta chains and beta-type chains.

Its function is as follows. The zeta chain is an alpha-type chain of mammalian embryonic hemoglobin. This is Hemoglobin subunit zeta (Hbz) from Mus musculus (Mouse).